The sequence spans 275 residues: Methylglyoxal reductase DkgA (275 aa).

The active-site Proton donor is Tyr-51. Position 107 (His-107) interacts with substrate. NADP(+) is bound at residue 187–241; sequence SPLAQGGKGVFDQKVIRDLADKYGKTPAQIVIRWHLDSGLVVIPKSVTPSRIAEN.

The protein belongs to the aldo/keto reductase family. As to quaternary structure, monomer.

It localises to the cytoplasm. The enzyme catalyses hydroxyacetone + NADP(+) = methylglyoxal + NADPH + H(+). The catalysed reaction is a primary alcohol + NADP(+) = an aldehyde + NADPH + H(+). It catalyses the reaction 2-dehydro-L-idonate + NADP(+) = 2,5-didehydro-D-gluconate + NADPH + H(+). Aldo-keto reductase that significantly contributes to cellular methylglyoxal detoxification by catalyzing the NADPH-dependent conversion of methylglyoxal to acetol. It also exhibits fairly high activity with glyoxal. Shows broad specificity and can use aromatic aldehydes such as 4-nitrobenzaldehyde, 3-nitrobenzaldehyde and benzaldehyde, and phenylglyoxal. Shows beta-keto ester reductase activity toward ethyl acetoacetate and a variety of 2-substituted derivatives. Also catalyzes the reduction of 2,5-diketo-D-gluconic acid (25DKG) to 2-keto-L-gulonic acid (2KLG) and could be involved in ketogluconate metabolism. However, the specific activity of the enzyme toward 2,5-diketo-D-gluconate was reported to be almost 400-fold lower than its activity toward methylglyoxal. Can catalyze in vitro the NADPH-dependent reduction of furfural, a natural product of lignocellulosic decomposition, to the less toxic product, furfuryl alcohol. However, it is unlikely that furfural is a physiological substrate. This is Methylglyoxal reductase DkgA from Escherichia coli (strain K12).